The chain runs to 495 residues: MSDLNKLGLAEARDLLRKGDTTSVELTEACLKAIDGADALNAFVHKTPDVALDRAKAADARIAEGDAPAMCGLPIGMKDLFCTKGVDSQAASNILKGFKPEYESTVSQKLQDAGAVMLGKLNMDEFAMGSSNETSAYGNAISPWRREGDETPLTPGGSSGGSAAAVAADLCLAATGTDTGGSIRQPAAFTGTVGIKPTYGRCSRWGIVAFASSLDQAGPMTKNVRDAAIMLEAMCGHDAKDSTSVDLAVPNFEAMLTGDIKGKKIGIPREYRMDGMPAEIAKLWDEGAAMLKAAGAEIVDISLPHTKYALPAYYVIAPAEASSNLARYDGVRYGHRATLAQGDGITEMYEKTRAEGFGHEVQRRVMVGTYVLSAGFYDAYYNRARKVRTLIKKDFEDVFAAGVDAILTPATPSAAFGLGEMNDEDPVKMYLNDVFTVTVNLAGLPGISVPTGVDTQGLPLGLQLIGRPWDEGDLLNTAYALEQAAGFVAKPAQWW.

Active-site charge relay system residues include lysine 78 and serine 158. Serine 182 serves as the catalytic Acyl-ester intermediate.

The protein belongs to the amidase family. GatA subfamily. In terms of assembly, heterotrimer of A, B and C subunits.

It carries out the reaction L-glutamyl-tRNA(Gln) + L-glutamine + ATP + H2O = L-glutaminyl-tRNA(Gln) + L-glutamate + ADP + phosphate + H(+). Its function is as follows. Allows the formation of correctly charged Gln-tRNA(Gln) through the transamidation of misacylated Glu-tRNA(Gln) in organisms which lack glutaminyl-tRNA synthetase. The reaction takes place in the presence of glutamine and ATP through an activated gamma-phospho-Glu-tRNA(Gln). This is Glutamyl-tRNA(Gln) amidotransferase subunit A from Ruegeria sp. (strain TM1040) (Silicibacter sp.).